The sequence spans 498 residues: DNA-directed RNA polymerase subunit Rpo2N (498 aa).

It belongs to the RNA polymerase beta chain family. As to quaternary structure, part of the RNA polymerase complex.

The protein resides in the cytoplasm. It catalyses the reaction RNA(n) + a ribonucleoside 5'-triphosphate = RNA(n+1) + diphosphate. Its function is as follows. DNA-dependent RNA polymerase (RNAP) catalyzes the transcription of DNA into RNA using the four ribonucleoside triphosphates as substrates. The Rpo2 subunit (Rpo2N and Rpo2C in this organism) is implicated in DNA promoter recognition and in nucleotide binding. This is DNA-directed RNA polymerase subunit Rpo2N from Methanocaldococcus jannaschii (strain ATCC 43067 / DSM 2661 / JAL-1 / JCM 10045 / NBRC 100440) (Methanococcus jannaschii).